We begin with the raw amino-acid sequence, 302 residues long: uncharacterized protein (302 aa).

The active site involves Glu47.

The protein belongs to the PhzF family.

This is an uncharacterized protein from Mesorhizobium japonicum (strain LMG 29417 / CECT 9101 / MAFF 303099) (Mesorhizobium loti (strain MAFF 303099)).